The following is a 490-amino-acid chain: Cytochrome P450 71B29 (490 aa).

A helical membrane pass occupies residues 1-21 (MAIILCFLILLPLILIFLKKL). Residue C440 coordinates heme.

It belongs to the cytochrome P450 family. The cofactor is heme.

It localises to the membrane. The polypeptide is Cytochrome P450 71B29 (CYP71B29) (Arabidopsis thaliana (Mouse-ear cress)).